We begin with the raw amino-acid sequence, 308 residues long: MVPSQSHPAKTPRKQLKPPIEAVQSHYDRSNEFFKLWLDPSMTYSCAYFERPDLTLEEAQRAKRDLALSKLGLEPGMTLLDIGCGWGSTMLHAIEKYDVNVIGLTLSANQLAHNKLKFAEIDHTRTDRTKDVRLQGWEQFDEPVDRIISLGAFEHFADGAGDAGFERYDSFFKMCYDVLPDDGRMLLHTIIVPDAKETKELGLTTPMSLLRFIKFILTEIFPGGRLPKISQVDHYSSNAGFTVERYHRIGSHYVPTLNAWAAALEAHKDEAIALQGRQIYDTYMHYLTGCSDLFRDRYTDVCQFTLVK.

S-adenosyl-L-methionine contacts are provided by residues 44–45, 79–87, 105–110, and 137–138; these read YS, LLDIGCGWG, TLSANQ, and WE. Cys-290 is an active-site residue.

It belongs to the CFA/CMAS family. In terms of assembly, homodimer.

It is found in the cytoplasm. It carries out the reaction a 1-acyl-2-(9Z)-enoyl-sn-glycero-3-phospholipid + S-adenosyl-L-methionine = a 1-acyl-2-(9-cyclopronane)-acyl-sn-glycero-3-phospholipid + S-adenosyl-L-homocysteine + H(+). Its pathway is lipid metabolism; mycolic acid biosynthesis. Functionally, catalyzes the formation of trans cyclopropanated ketomycolate or methoxymycolate through the conversion of a double bond to a cyclopropane ring at the proximal position of an oxygenated mycolic acid via the transfer of a methylene group from S-adenosyl-L-methionine. In the absence of MmaA2, CmaA2 has a non-specific cis-cyclopropanating activity and is able to catalyze the conversion of a double bond to a cis cyclopropane ring at the distal position of an alpha mycolic acid. Cyclopropanated mycolic acids are key factors participating in cell envelope permeability, host immunomodulation and persistence. This is Cyclopropane mycolic acid synthase 2 (cmaA2) from Mycobacterium leprae (strain TN).